We begin with the raw amino-acid sequence, 98 residues long: ESAT-6-like protein EsxJ (98 aa).

This sequence belongs to the WXG100 family. CFP-10 subfamily.

Its subcellular location is the secreted. This is ESAT-6-like protein EsxJ from Mycobacterium bovis (strain ATCC BAA-935 / AF2122/97).